The primary structure comprises 261 residues: 7beta-hydroxysteroid dehydrogenase (261 aa).

Residues 17–21 (TEGIG), 40–41 (RR), and 66–67 (DL) each bind NADP(+). Residue Tyr-156 is the Proton acceptor of the active site.

This sequence belongs to the short-chain dehydrogenases/reductases (SDR) family. In terms of assembly, homodimer.

The catalysed reaction is a 7beta-hydroxysteroid + NADP(+) = a 7-oxosteroid + NADPH + H(+). The enzyme catalyses ursocholate + NADP(+) = 3alpha,12alpha-dihydroxy-7-oxo-5beta-cholanate + NADPH + H(+). It catalyses the reaction 7-oxolithocholate + NADPH + H(+) = ursodeoxycholate + NADP(+). It carries out the reaction 3alpha,7beta-dihydroxy-12-oxo-5beta-cholan-24-oate + NADP(+) = 7,12-dioxo-lithocholate + NADPH + H(+). The catalysed reaction is 7beta-hydroxy-3,12-dioxo-5beta-cholan-24-oate + NADP(+) = dehydrocholate + NADPH + H(+). 7beta-hydroxysteroid dehydrogenase that catalyzes the reduction of the 7-oxo group of 7-oxosteroids, such as 3alpha,12alpha-dihydroxy-7-oxo-5beta-cholanate, 7-oxolithocholate, 7,12-dioxo-lithocholate and dehydrocholate, to the corresponding 7beta-hydroxysteroids. Is also able to catalyze the reverse oxidation reactions. Together with 7alpha-HSDH encoded in the adjacent gene, is likely involved in the epimerization of the hydroxy group at C-7 of primary bile acids through 7-keto bile acid intermediates. The polypeptide is 7beta-hydroxysteroid dehydrogenase (Clostridium sardiniense (Clostridium absonum)).